Reading from the N-terminus, the 262-residue chain is GDT1-like protein C186.05c (262 aa).

5 helical membrane passes run 31–51 (ISMI…ALLA), 57–77 (ASVF…AVLV), 83–103 (FLFP…IFGV), 208–228 (VLDV…VAVI), and 242–262 (VLFF…FQGF).

The protein belongs to the GDT1 family.

The protein resides in the endoplasmic reticulum membrane. The sequence is that of GDT1-like protein C186.05c from Schizosaccharomyces pombe (strain 972 / ATCC 24843) (Fission yeast).